The sequence spans 398 residues: Exodeoxyribonuclease 7 large subunit (398 aa).

This sequence belongs to the XseA family. Heterooligomer composed of large and small subunits.

Its subcellular location is the cytoplasm. The catalysed reaction is Exonucleolytic cleavage in either 5'- to 3'- or 3'- to 5'-direction to yield nucleoside 5'-phosphates.. Functionally, bidirectionally degrades single-stranded DNA into large acid-insoluble oligonucleotides, which are then degraded further into small acid-soluble oligonucleotides. The polypeptide is Exodeoxyribonuclease 7 large subunit (Salinibacter ruber (strain DSM 13855 / M31)).